A 477-amino-acid chain; its full sequence is Aspartyl/glutamyl-tRNA(Asn/Gln) amidotransferase subunit B (477 aa).

This sequence belongs to the GatB/GatE family. GatB subfamily. As to quaternary structure, heterotrimer of A, B and C subunits.

It carries out the reaction L-glutamyl-tRNA(Gln) + L-glutamine + ATP + H2O = L-glutaminyl-tRNA(Gln) + L-glutamate + ADP + phosphate + H(+). It catalyses the reaction L-aspartyl-tRNA(Asn) + L-glutamine + ATP + H2O = L-asparaginyl-tRNA(Asn) + L-glutamate + ADP + phosphate + 2 H(+). In terms of biological role, allows the formation of correctly charged Asn-tRNA(Asn) or Gln-tRNA(Gln) through the transamidation of misacylated Asp-tRNA(Asn) or Glu-tRNA(Gln) in organisms which lack either or both of asparaginyl-tRNA or glutaminyl-tRNA synthetases. The reaction takes place in the presence of glutamine and ATP through an activated phospho-Asp-tRNA(Asn) or phospho-Glu-tRNA(Gln). The protein is Aspartyl/glutamyl-tRNA(Asn/Gln) amidotransferase subunit B of Nitrosococcus oceani (strain ATCC 19707 / BCRC 17464 / JCM 30415 / NCIMB 11848 / C-107).